The primary structure comprises 315 residues: Mitochondrial glycine transporter (315 aa).

3 Solcar repeats span residues 19 to 102, 125 to 206, and 221 to 305; these read SKTT…LRTG, TANL…LKRR, and KSSS…LILR. The next 6 helical transmembrane spans lie at 25-50, 77-103, 128-153, 181-204, 225-251, and 280-298; these read FTAG…TRVQ, GTLP…RTGL, LATG…VRYE, GFGA…EQLK, INFV…KTRL, and GLGL…AWTV.

The protein belongs to the mitochondrial carrier (TC 2.A.29) family. SLC25A38 subfamily.

The protein resides in the mitochondrion inner membrane. It carries out the reaction glycine(in) = glycine(out). Its function is as follows. Mitochondrial glycine transporter that imports glycine into the mitochondrial matrix. Plays an important role in providing glycine for the first enzymatic step in heme biosynthesis, the condensation of glycine with succinyl-CoA to produce 5-aminolevulinate (ALA) in the mitochondrial matrix. The sequence is that of Mitochondrial glycine transporter from Aspergillus niger (strain ATCC MYA-4892 / CBS 513.88 / FGSC A1513).